The sequence spans 201 residues: Superoxide dismutase [Mn/Fe] (201 aa).

Residues His-27, His-81, Asp-162, and His-166 each contribute to the Fe(3+) site. Residues His-27, His-81, Asp-162, and His-166 each contribute to the Mn(2+) site.

This sequence belongs to the iron/manganese superoxide dismutase family. As to quaternary structure, homodimer. Mn(2+) serves as cofactor. The cofactor is Fe(3+).

It carries out the reaction 2 superoxide + 2 H(+) = H2O2 + O2. In terms of biological role, destroys superoxide anion radicals which are normally produced within the cells and which are toxic to biological systems. Catalyzes the dismutation of superoxide anion radicals into O2 and H2O2 by successive reduction and oxidation of the transition metal ion at the active site. In Staphylococcus carnosus, this protein is Superoxide dismutase [Mn/Fe] (sodA).